Reading from the N-terminus, the 295-residue chain is uncharacterized protein (295 aa).

Basic residues predominate over residues methionine 1 to arginine 13. 2 disordered regions span residues methionine 1 to serine 111 and threonine 183 to serine 295. Over residues alanine 57–proline 67 the composition is skewed to low complexity. A compositionally biased stretch (pro residues) spans alanine 68–proline 77. 2 stretches are compositionally biased toward basic and acidic residues: residues leucine 245–proline 257 and glycine 280–serine 295.

This is an uncharacterized protein from Homo sapiens (Human).